The sequence spans 769 residues: Acetyl-coenzyme A carboxylase carboxyl transferase subunit alpha, chloroplastic (769 aa).

Residues 1–54 (MASISHSSLALGGASSASASDYLRSSSNGVNGVPLKTLGRAVFTTIRRKDLAVT) constitute a chloroplast transit peptide. Residues 132–385 (LENKYRQALK…KIAINENMNE (254 aa)) enclose the CoA carboxyltransferase C-terminal domain. Coiled coils occupy residues 426-504 (EAVF…ASSE) and 631-744 (KQNQ…SDGS). A disordered region spans residues 718–769 (GLQEKQDELEKELAAARELAAEESDGSVKEDDDDDEDSSESGKSEMVNPSFA). Over residues 721–732 (EKQDELEKELAA) the composition is skewed to basic and acidic residues. Positions 738-756 (AEESDGSVKEDDDDDEDSS) are enriched in acidic residues. Ser741 bears the Phosphoserine mark.

The protein belongs to the AccA family. Acetyl-CoA carboxylase is a heterohexamer composed of biotin carboxyl carrier protein, biotin carboxylase and two subunits each of ACCase subunit alpha and ACCase plastid-coded subunit beta (accD). As to expression, accumulates in fatty acids synthesizing tissues such as embryos, expanding leaves, flower buds, flowers, and developing siliques.

It localises to the plastid. The protein localises to the chloroplast inner membrane. It carries out the reaction N(6)-carboxybiotinyl-L-lysyl-[protein] + acetyl-CoA = N(6)-biotinyl-L-lysyl-[protein] + malonyl-CoA. It participates in lipid metabolism; malonyl-CoA biosynthesis; malonyl-CoA from acetyl-CoA: step 1/1. Its function is as follows. Component of the acetyl coenzyme A carboxylase (ACC) complex. First, biotin carboxylase catalyzes the carboxylation of biotin on its carrier protein (BCCP) and then the CO(2) group is transferred by the carboxyltransferase to acetyl-CoA to form malonyl-CoA. This chain is Acetyl-coenzyme A carboxylase carboxyl transferase subunit alpha, chloroplastic (CAC3), found in Arabidopsis thaliana (Mouse-ear cress).